A 110-amino-acid chain; its full sequence is Putative protein RIG (110 aa).

As to expression, expressed predominantly in brain and weakly in heart and lung. Expression is reduced or undetectable in cultured glioma cells, primary glioblastoma cells and malignant glioblastoma tumors.

Functionally, may serve as a molecular marker for or play a role in the malignant progression of glioblastomas. This chain is Putative protein RIG (RIG), found in Homo sapiens (Human).